The following is a 241-amino-acid chain: Large ribosomal subunit protein uL1 (241 aa).

This sequence belongs to the universal ribosomal protein uL1 family. As to quaternary structure, part of the 50S ribosomal subunit.

Binds directly to 23S rRNA. The L1 stalk is quite mobile in the ribosome, and is involved in E site tRNA release. In terms of biological role, protein L1 is also a translational repressor protein, it controls the translation of the L11 operon by binding to its mRNA. This is Large ribosomal subunit protein uL1 from Streptomyces avermitilis (strain ATCC 31267 / DSM 46492 / JCM 5070 / NBRC 14893 / NCIMB 12804 / NRRL 8165 / MA-4680).